We begin with the raw amino-acid sequence, 227 residues long: ATP-dependent Clp protease proteolytic subunit 1 (227 aa).

S124 acts as the Nucleophile in catalysis. Residue H149 is part of the active site.

It belongs to the peptidase S14 family. Fourteen ClpP subunits assemble into 2 heptameric rings which stack back to back to give a disk-like structure with a central cavity, resembling the structure of eukaryotic proteasomes.

The protein resides in the cytoplasm. It carries out the reaction Hydrolysis of proteins to small peptides in the presence of ATP and magnesium. alpha-casein is the usual test substrate. In the absence of ATP, only oligopeptides shorter than five residues are hydrolyzed (such as succinyl-Leu-Tyr-|-NHMec, and Leu-Tyr-Leu-|-Tyr-Trp, in which cleavage of the -Tyr-|-Leu- and -Tyr-|-Trp bonds also occurs).. Its function is as follows. Cleaves peptides in various proteins in a process that requires ATP hydrolysis. Has a chymotrypsin-like activity. Plays a major role in the degradation of misfolded proteins. This chain is ATP-dependent Clp protease proteolytic subunit 1, found in Rhodopirellula baltica (strain DSM 10527 / NCIMB 13988 / SH1).